A 488-amino-acid polypeptide reads, in one-letter code: MSDNIDSKICTVYTTDGHFQMTYQTIKENDFFKNIFEIVDSICVRMNSVEFEYVAQYLRKEIPKDILINFAYVVKNFGIDFENIVYFNIGGKIFSFEKDFVTKKFKYFERFIVNYPGLGPDYTSILIDKSYNKFQQVLDFVKNQKCPINNDLEIELEYYGWIPNKNIKEFIDVSHFNFIHEGYESFVNHLDQPKYVVSKHSVINDGDKNIYQANIHTMGHVIIVVCLKNNIKKVDLLSKIHVCFQKENEKVPGEENYRSLTNYYLLRKNKHQIIIREALSSQYGDFITYNFNMKISKDLEIDSIKFYCINNGNIRDYYDIPNKKIIEYGKDESIDKINIKLHDLIFSVENSKFSCNYLLNRGINKKIVMDYIFKKDGYVIDYLLFEIPTEIEVSHIELKSRDEIICVSKLEEITLVPPLNRYPNTGSRKIVPVLSNRPTKLYRINKLYNKKLNVNFLLSHEMFCEIVIVLKEPSSGWLKLKYQYMNYY.

The BTB domain maps to 83–150 (NIVYFNIGGK…VKNQKCPINN (68 aa)).

This sequence belongs to the mimivirus BTB/WD family.

This chain is Putative BTB/POZ domain-containing protein L674, found in Acanthamoeba polyphaga (Amoeba).